The following is a 336-amino-acid chain: Holliday junction branch migration complex subunit RuvB (336 aa).

The interval 1–183 is large ATPase domain (RuvB-L); sequence MTEEHLTSQE…FGIVEHMQYY (183 aa). ATP-binding positions include leucine 22, arginine 23, glycine 64, lysine 67, threonine 68, threonine 69, 130 to 132, arginine 173, tyrosine 183, and arginine 220; that span reads EDF. A Mg(2+)-binding site is contributed by threonine 68. A small ATPAse domain (RuvB-S) region spans residues 184–254; sequence QVEDLEKIIL…TTAMALKQLQ (71 aa). Positions 257–336 are head domain (RuvB-H); sequence SAGLDQTDRK…LNLPLPGEEE (80 aa). DNA contacts are provided by arginine 293 and arginine 317.

Belongs to the RuvB family. As to quaternary structure, homohexamer. Forms an RuvA(8)-RuvB(12)-Holliday junction (HJ) complex. HJ DNA is sandwiched between 2 RuvA tetramers; dsDNA enters through RuvA and exits via RuvB. An RuvB hexamer assembles on each DNA strand where it exits the tetramer. Each RuvB hexamer is contacted by two RuvA subunits (via domain III) on 2 adjacent RuvB subunits; this complex drives branch migration. In the full resolvosome a probable DNA-RuvA(4)-RuvB(12)-RuvC(2) complex forms which resolves the HJ.

The protein localises to the cytoplasm. The catalysed reaction is ATP + H2O = ADP + phosphate + H(+). In terms of biological role, the RuvA-RuvB-RuvC complex processes Holliday junction (HJ) DNA during genetic recombination and DNA repair, while the RuvA-RuvB complex plays an important role in the rescue of blocked DNA replication forks via replication fork reversal (RFR). RuvA specifically binds to HJ cruciform DNA, conferring on it an open structure. The RuvB hexamer acts as an ATP-dependent pump, pulling dsDNA into and through the RuvAB complex. RuvB forms 2 homohexamers on either side of HJ DNA bound by 1 or 2 RuvA tetramers; 4 subunits per hexamer contact DNA at a time. Coordinated motions by a converter formed by DNA-disengaged RuvB subunits stimulates ATP hydrolysis and nucleotide exchange. Immobilization of the converter enables RuvB to convert the ATP-contained energy into a lever motion, pulling 2 nucleotides of DNA out of the RuvA tetramer per ATP hydrolyzed, thus driving DNA branch migration. The RuvB motors rotate together with the DNA substrate, which together with the progressing nucleotide cycle form the mechanistic basis for DNA recombination by continuous HJ branch migration. Branch migration allows RuvC to scan DNA until it finds its consensus sequence, where it cleaves and resolves cruciform DNA. The chain is Holliday junction branch migration complex subunit RuvB from Lactobacillus delbrueckii subsp. bulgaricus (strain ATCC 11842 / DSM 20081 / BCRC 10696 / JCM 1002 / NBRC 13953 / NCIMB 11778 / NCTC 12712 / WDCM 00102 / Lb 14).